The chain runs to 303 residues: Ribonuclease P protein subunit p40 (303 aa).

Component of nuclear RNase P and RNase MRP ribonucleoproteins. RNase P consists of a catalytic RNA moiety and about 10 protein subunits; POP1, POP4, POP5, POP7, RPP14, RPP21, RPP25, RPP30, RPP38 and RPP40. Within the RNase P complex, POP1, POP7 and RPP25 form the 'finger' subcomplex, POP5, RPP14, RPP40 and homodimeric RPP30 form the 'palm' subcomplex, and RPP21, POP4 and RPP38 form the 'wrist' subcomplex. All subunits of the RNase P complex interact with the catalytic RNA. Several subunits of RNase P are also part of the RNase MRP complex. RNase MRP consists of a catalytic RNA moiety and about 8 protein subunits; POP1, POP7, RPP25, RPP30, RPP38, RPP40 and possibly also POP4 and POP5.

The protein localises to the nucleus. The protein resides in the nucleolus. In terms of biological role, component of ribonuclease P, a ribonucleoprotein complex that generates mature tRNA molecules by cleaving their 5'-ends. Also a component of the MRP ribonuclease complex, which cleaves pre-rRNA sequences. The chain is Ribonuclease P protein subunit p40 (RPP40) from Bos taurus (Bovine).